The chain runs to 431 residues: Serine--tRNA ligase (431 aa).

236–238 is an L-serine binding site; sequence TAE. Position 267-269 (267-269) interacts with ATP; it reads RSE. Glu290 serves as a coordination point for L-serine. An ATP-binding site is contributed by 354-357; the sequence is EISS. Ser389 contributes to the L-serine binding site.

Belongs to the class-II aminoacyl-tRNA synthetase family. Type-1 seryl-tRNA synthetase subfamily. In terms of assembly, homodimer. The tRNA molecule binds across the dimer.

The protein resides in the cytoplasm. The catalysed reaction is tRNA(Ser) + L-serine + ATP = L-seryl-tRNA(Ser) + AMP + diphosphate + H(+). The enzyme catalyses tRNA(Sec) + L-serine + ATP = L-seryl-tRNA(Sec) + AMP + diphosphate + H(+). It functions in the pathway aminoacyl-tRNA biosynthesis; selenocysteinyl-tRNA(Sec) biosynthesis; L-seryl-tRNA(Sec) from L-serine and tRNA(Sec): step 1/1. Its function is as follows. Catalyzes the attachment of serine to tRNA(Ser). Is also able to aminoacylate tRNA(Sec) with serine, to form the misacylated tRNA L-seryl-tRNA(Sec), which will be further converted into selenocysteinyl-tRNA(Sec). The polypeptide is Serine--tRNA ligase (Janthinobacterium sp. (strain Marseille) (Minibacterium massiliensis)).